The primary structure comprises 511 residues: Histidine ammonia-lyase (511 aa).

Residues 142 to 144 constitute a cross-link (5-imidazolinone (Ala-Gly)); the sequence is ASG. The residue at position 143 (Ser143) is a 2,3-didehydroalanine (Ser).

Belongs to the PAL/histidase family. Contains an active site 4-methylidene-imidazol-5-one (MIO), which is formed autocatalytically by cyclization and dehydration of residues Ala-Ser-Gly.

The protein localises to the cytoplasm. It catalyses the reaction L-histidine = trans-urocanate + NH4(+). It functions in the pathway amino-acid degradation; L-histidine degradation into L-glutamate; N-formimidoyl-L-glutamate from L-histidine: step 1/3. This chain is Histidine ammonia-lyase, found in Phenylobacterium zucineum (strain HLK1).